A 577-amino-acid chain; its full sequence is Anthranilate synthase alpha subunit 1, chloroplastic (577 aa).

The transit peptide at 1–34 (MASLVLSLRIAPSTPPLGLGGGRFRGRRGAVACR) directs the protein to the chloroplast.

The protein belongs to the anthranilate synthase component I family. Heterotetramer consisting of two non-identical subunits: a beta subunit and a large alpha subunit.

Its subcellular location is the plastid. It localises to the chloroplast. The enzyme catalyses chorismate + L-glutamine = anthranilate + pyruvate + L-glutamate + H(+). It participates in amino-acid biosynthesis; L-tryptophan biosynthesis; L-tryptophan from chorismate: step 1/5. Feedback inhibition by tryptophan. In terms of biological role, part of a heterotetrameric complex that catalyzes the two-step biosynthesis of anthranilate, an intermediate in the biosynthesis of L-tryptophan. In the first step, the glutamine-binding beta subunit of anthranilate synthase (AS) provides the glutamine amidotransferase activity which generates ammonia as a substrate that, along with chorismate, is used in the second step, catalyzed by the large alpha subunit of AS to produce anthranilate. This is Anthranilate synthase alpha subunit 1, chloroplastic (ASA1) from Oryza sativa subsp. indica (Rice).